A 182-amino-acid polypeptide reads, in one-letter code: Adenylate kinase (182 aa).

An ATP-binding site is contributed by 12–17; the sequence is GAGKGT. The NMP stretch occupies residues 32–61; it reads STGELLRKEIDLDTYLGKQVKDIMNKGELV. Residues Thr33, Arg38, 59–61, 85–88, and Gln92 each bind AMP; these read ELV and GYPR. The LID stretch occupies residues 126–132; it reads LRGRKDD. Residue Arg127 participates in ATP binding. AMP contacts are provided by Arg129 and Arg140. Gly168 is an ATP binding site.

It belongs to the adenylate kinase family. As to quaternary structure, monomer.

The protein localises to the cytoplasm. It carries out the reaction AMP + ATP = 2 ADP. The protein operates within purine metabolism; AMP biosynthesis via salvage pathway; AMP from ADP: step 1/1. Catalyzes the reversible transfer of the terminal phosphate group between ATP and AMP. Plays an important role in cellular energy homeostasis and in adenine nucleotide metabolism. The polypeptide is Adenylate kinase (Prochlorococcus marinus (strain MIT 9515)).